The following is a 312-amino-acid chain: Olfactory receptor 2J2 (312 aa).

At 1–26 (MMIKKNASSEDFFILLGFSNWPQLEV) the chain is on the extracellular side. N6 carries N-linked (GlcNAc...) asparagine glycosylation. A helical transmembrane segment spans residues 27–50 (VLFVVILIFYLMTLTGNLFIIILS). Over 51–58 (YVDSHLHT) the chain is Cytoplasmic. A helical membrane pass occupies residues 59 to 80 (PMYFFLSNLSFLDLCHTTSSIP). Over 81–101 (QLLVNLRGPEKTISYAGCMVQ) the chain is Extracellular. C98 and C190 are oxidised to a cystine. The chain crosses the membrane as a helical span at residues 102–121 (LYFVLALGIAECVLLVVMSY). Residues 122 to 140 (DRYVAVCRPLHYTVLMHPR) lie on the Cytoplasmic side of the membrane. A helical transmembrane segment spans residues 141 to 159 (FCHLLAAASWVIGFTISAL). The Extracellular segment spans residues 160–196 (HSSFTFWVPLCGHRLVDHFFCEVPALLRLSCVDTHAN). A helical transmembrane segment spans residues 197–220 (ELTLMVMSSIFVLIPLILILTAYG). The Cytoplasmic portion of the chain corresponds to 221-237 (AIARAVLSMQSTTGLQK). The chain crosses the membrane as a helical span at residues 238-260 (VFRTCGAHLMVVSLFFIPVMCMY). At 261-273 (LQPPSENSPDQGK) the chain is on the extracellular side. A helical transmembrane segment spans residues 274-293 (FIALFYTVVTPSLNPLIYTL). Residues 294–312 (RNKHVKGAAKRLLGWEWGK) lie on the Cytoplasmic side of the membrane.

This sequence belongs to the G-protein coupled receptor 1 family.

The protein resides in the cell membrane. Functionally, odorant receptor. This chain is Olfactory receptor 2J2 (OR2J2), found in Homo sapiens (Human).